Reading from the N-terminus, the 269-residue chain is Proline-rich protein 7 (269 aa).

Over 1–9 the chain is Extracellular; sequence MVMSQGTYT. The interval 1 to 44 is required for interaction with NMDA receptors; that stretch reads MVMSQGTYTFLTCFAGFWLIWGLIVLLCCFCSFLRRRLKRRQEE. The interval 2-39 is required for membrane localization; the sequence is VMSQGTYTFLTCFAGFWLIWGLIVLLCCFCSFLRRRLK. The chain crosses the membrane as a helical; Signal-anchor for type III membrane protein span at residues 10-30; sequence FLTCFAGFWLIWGLIVLLCCF. The Cytoplasmic segment spans residues 31–269; the sequence is CSFLRRRLKR…IPLFGRTTAV (239 aa). Position 64 is a phosphoserine (serine 64). Disordered stretches follow at residues 64–83 and 98–128; these read SLAGSPPGLAPPPPPHRSRL and LLHHGPAQPHAHPHPHHHALPHPPPSHLSVP. The span at 108–117 shows a compositional bias: basic residues; the sequence is AHPHPHHHAL. Residues 118-128 are compositionally biased toward pro residues; sequence PHPPPSHLSVP. The tract at residues 146–166 is required for internalization; that stretch reads PCYEEAVLMAEPPPPYSEVLT. Residues 146 to 269 are required for apoptosis induction; it reads PCYEEAVLMA…IPLFGRTTAV (124 aa). The PDZ-binding motif lies at 267–269; that stretch reads TAV.

In terms of assembly, forms a complex with NMDA receptor zeta subunit GRIN1 and epsilon subunit GRIN2B. Interacts with GRIN2B. Interacts with GRIN1; the interaction is reduced upon NMDA receptor activity. Found in a postsynaptic membrane complex with DLG4 and GRIN1. Interacts with DLG4 (via PDZ3 domain and to lesser degree via PDZ2 domain). Interacts with FBXW7. Found in a complex with JUN and FBXW7. Interacts with JUN and FBXW7; the interaction inhibits ubiquitination-mediated JUN degradation promoting its phosphorylation and transcriptional activity. Interacts with SRC. Palmitoylated. Post-translationally, tyrosine phosphorylated, possibly by SRC. Expressed in brain. Expressed in the cerebral cortex and especially in hippocampal neural cells (at protein level).

It localises to the cell membrane. Its subcellular location is the postsynaptic cell membrane. The protein resides in the postsynaptic density membrane. It is found in the cytoplasm. The protein localises to the perinuclear region. It localises to the synapse. Its subcellular location is the cell projection. The protein resides in the dendrite. It is found in the nucleus. In terms of biological role, acts as a synapse-to-nucleus messenger to promote NMDA receptor-mediated excitotoxicity in neurons in a JUN-dependent manner. Inhibits ubiquitination-mediated degradation and promotes phosphorylation and transcriptional activity of transcription factor JUN. Might play a redundant role in the regulation of T cell receptor signaling. Might promote apoptosis in T cells. The protein is Proline-rich protein 7 (Prr7) of Rattus norvegicus (Rat).